The primary structure comprises 1339 residues: MRRFFPMAERAKLLFHNEAMDKTAMKQLISRLINHFGMTYTSNISDQLKTSGFQRATDAAISLGIDDLLTAPSKGWLVQDAEQQGSISEKHHHYGNVHAVEKLRQSIETWYATSEYLRQEMNPNFRMTDPFNPVHMMSFSGSRGSTSQVHQLVGMRGLVSDPQGQIVDLPIQSNFREGLSLTEYIISCYGARKGVVDTAVRTSDAGYLTRRLVEVVQHIVVRKTDCGTIQGIFVNLIQGRERIKNRIVLQTLIGRVLADDVYIDMRCIATRNQDIGVGLAHQLITLRAQPIYIRTPSTCKSLSRICRLCYGRSPTHGNLIELGEAVGIIAGQSIGEPGTQLTLRTFHTGGIFTGDIAEHVRAPFNGKIEFDENLVYPTRTRHGHPAFMCHNNLSITLDGQDQVHDLTISPQSLLLVQNNQYVESEQIIAEVHARTSPSKEKVRKHIYSNLEGEMHWSTNVCHAPEYVQGNVHLILRTSHLWVLSGGIHGSSAVSFPFHKDQDQVNVQLPLAKHELLPDYSVNQDRMKHKSVDSNFYGKEEQISSYSEIDRVISNEHWDSIYSTISSDNFNISGKKQRNRFFVPLRYDKERGNKGISRPNLIIKISRNGISQRNDIFAVLDDPRYRINSSGIIKYGTIKVDSIGNKENYLGDQRARGFRSKDKMKGGRFLFIPEEVHILYESSSIMVQNNSIIRAGTQITCDIESQVGGLVRIVRIKKKIEMRILPGDIYFPGEIHGISRHNGTLIPPGKILFDEFQSENWIYLQWIIPPKEKPFVPVRPVVEYGIPDGPDITAPLSLDLLREGDNLQVRVGNFLLYGDGERIQVINDISIQLVRTYLVLDWEQKDSMEEAYAYLTEVRTNGIVRNXLQISLAKYPILYMGKRKNTAGSKSMFHNKLDHANPISSNEESQLLSQHQGTIRALPNEREEGGSLMVLSPSDCSRIVLSKGSKHYDMVNRSIQDDSMMQIIELSGFLGNLHSIANRSPSSHSITYNKYYNISLKEQPIFGNSENTLRVPKWYFMDENTVVSNFGPCRNIISDLFNSNRCFPLSKFCENPFPVVSLGQLIRESVRISEDEPLPGSGQIIAVHEESLVIRLAELYLATRRATVHGHYGEIINEGDTLITLIYERFKSGDIIQGLPKVEQLSEARSINSISMNLEKSFEDWNRDMTRSLGSPWGSFISSKITMEQSRIHLVNQIQRVYRSQGVQISDKHIEIIVRQMTSKVLISGDGMADVFLPGELIELSRAQRMDRALKEATYYRTMLLGATRASLDTQSFISEAGFQETARVLARAALQGRIDWLKGLKENVILGGIVPAGTGFKQSIYHSGERNEIDPRTGK.

4 residues coordinate Zn(2+): Cys-226, Cys-299, Cys-306, and Cys-309.

It belongs to the RNA polymerase beta' chain family. RpoC2 subfamily. In terms of assembly, in plastids the minimal PEP RNA polymerase catalytic core is composed of four subunits: alpha, beta, beta', and beta''. When a (nuclear-encoded) sigma factor is associated with the core the holoenzyme is formed, which can initiate transcription. It depends on Zn(2+) as a cofactor.

The protein resides in the plastid. It is found in the chloroplast. It carries out the reaction RNA(n) + a ribonucleoside 5'-triphosphate = RNA(n+1) + diphosphate. In terms of biological role, DNA-dependent RNA polymerase catalyzes the transcription of DNA into RNA using the four ribonucleoside triphosphates as substrates. The polypeptide is DNA-directed RNA polymerase subunit beta'' (Cycas taitungensis (Prince sago)).